Here is a 481-residue protein sequence, read N- to C-terminus: Aspartyl/glutamyl-tRNA(Asn/Gln) amidotransferase subunit B (481 aa).

It belongs to the GatB/GatE family. GatB subfamily. In terms of assembly, heterotrimer of A, B and C subunits.

It catalyses the reaction L-glutamyl-tRNA(Gln) + L-glutamine + ATP + H2O = L-glutaminyl-tRNA(Gln) + L-glutamate + ADP + phosphate + H(+). The catalysed reaction is L-aspartyl-tRNA(Asn) + L-glutamine + ATP + H2O = L-asparaginyl-tRNA(Asn) + L-glutamate + ADP + phosphate + 2 H(+). Allows the formation of correctly charged Asn-tRNA(Asn) or Gln-tRNA(Gln) through the transamidation of misacylated Asp-tRNA(Asn) or Glu-tRNA(Gln) in organisms which lack either or both of asparaginyl-tRNA or glutaminyl-tRNA synthetases. The reaction takes place in the presence of glutamine and ATP through an activated phospho-Asp-tRNA(Asn) or phospho-Glu-tRNA(Gln). The protein is Aspartyl/glutamyl-tRNA(Asn/Gln) amidotransferase subunit B of Pseudomonas fluorescens (strain SBW25).